An 87-amino-acid chain; its full sequence is Small ribosomal subunit protein uS17 (87 aa).

The protein belongs to the universal ribosomal protein uS17 family. As to quaternary structure, part of the 30S ribosomal subunit.

One of the primary rRNA binding proteins, it binds specifically to the 5'-end of 16S ribosomal RNA. This Anoxybacillus flavithermus (strain DSM 21510 / WK1) protein is Small ribosomal subunit protein uS17.